The chain runs to 256 residues: Agamous-like MADS-box protein AGL18 (256 aa).

The region spanning 1 to 61 (MGRGRIEIKK…GKIYDFSSVC (61 aa)) is the MADS-box domain. The region spanning 94–184 (NEAVLRNDDS…RKQVEMLGRG (91 aa)) is the K-box domain. A disordered region spans residues 179 to 232 (EMLGRGSGPKVLNERPQDSSPEADPESSSSEEDENDNEEHHSDTSLQLGLSSTG). Residues 199 to 215 (PEADPESSSSEEDENDN) are compositionally biased toward acidic residues. Over residues 222-232 (TSLQLGLSSTG) the composition is skewed to polar residues.

As to expression, mostly expressed in pollen, roots, flowers and siliques, and to a lower extent, in stems and leaves. Expressed in the endosperm and in developing male and female gametophytes. Also present in seedlings.

The protein resides in the nucleus. Functionally, probable transcription factor involved in the negative regulation of flowering, probably through the photoperiodic pathway. Prevents premature flowering. Downstream regulator of a subset of the MIKC* MADS-controlled genes required during pollen maturation. In Arabidopsis thaliana (Mouse-ear cress), this protein is Agamous-like MADS-box protein AGL18 (AGL18).